The following is a 219-amino-acid chain: uncharacterized protein (219 aa).

This is an uncharacterized protein from Escherichia coli (Bacteriophage T4).